A 382-amino-acid chain; its full sequence is Dual-specificity RNA methyltransferase RlmN (382 aa).

Glu-96 functions as the Proton acceptor in the catalytic mechanism. A Radical SAM core domain is found at 102–342 (QGKRGTLCVS…VRTTRGEDID (241 aa)). Cys-109 and Cys-345 are oxidised to a cystine. Residues Cys-116, Cys-120, and Cys-123 each contribute to the [4Fe-4S] cluster site. S-adenosyl-L-methionine contacts are provided by residues 170–171 (GE), Ser-202, 224–226 (SLH), and Asn-302. The active-site S-methylcysteine intermediate is the Cys-345.

It belongs to the radical SAM superfamily. RlmN family. It depends on [4Fe-4S] cluster as a cofactor.

Its subcellular location is the cytoplasm. It catalyses the reaction adenosine(2503) in 23S rRNA + 2 reduced [2Fe-2S]-[ferredoxin] + 2 S-adenosyl-L-methionine = 2-methyladenosine(2503) in 23S rRNA + 5'-deoxyadenosine + L-methionine + 2 oxidized [2Fe-2S]-[ferredoxin] + S-adenosyl-L-homocysteine. It carries out the reaction adenosine(37) in tRNA + 2 reduced [2Fe-2S]-[ferredoxin] + 2 S-adenosyl-L-methionine = 2-methyladenosine(37) in tRNA + 5'-deoxyadenosine + L-methionine + 2 oxidized [2Fe-2S]-[ferredoxin] + S-adenosyl-L-homocysteine. Specifically methylates position 2 of adenine 2503 in 23S rRNA and position 2 of adenine 37 in tRNAs. m2A2503 modification seems to play a crucial role in the proofreading step occurring at the peptidyl transferase center and thus would serve to optimize ribosomal fidelity. This Pseudomonas fluorescens (strain Pf0-1) protein is Dual-specificity RNA methyltransferase RlmN.